A 396-amino-acid polypeptide reads, in one-letter code: Ribosomal RNA large subunit methyltransferase I (396 aa).

A PUA domain is found at Thr-2 to Arg-81.

This sequence belongs to the methyltransferase superfamily. RlmI family.

Its subcellular location is the cytoplasm. It carries out the reaction cytidine(1962) in 23S rRNA + S-adenosyl-L-methionine = 5-methylcytidine(1962) in 23S rRNA + S-adenosyl-L-homocysteine + H(+). Functionally, specifically methylates the cytosine at position 1962 (m5C1962) of 23S rRNA. This is Ribosomal RNA large subunit methyltransferase I from Serratia proteamaculans (strain 568).